We begin with the raw amino-acid sequence, 490 residues long: Glutamate--tRNA ligase 2 (490 aa).

Positions 33–43 match the 'HIGH' region motif; it reads PSPTGYLHIGG. Positions 262-266 match the 'KMSKS' region motif; it reads KLSKR. Lys265 serves as a coordination point for ATP.

Belongs to the class-I aminoacyl-tRNA synthetase family. Glutamate--tRNA ligase type 1 subfamily. In terms of assembly, monomer.

The protein resides in the cytoplasm. The enzyme catalyses tRNA(Glu) + L-glutamate + ATP = L-glutamyl-tRNA(Glu) + AMP + diphosphate. Functionally, catalyzes the attachment of glutamate to tRNA(Glu) in a two-step reaction: glutamate is first activated by ATP to form Glu-AMP and then transferred to the acceptor end of tRNA(Glu). This chain is Glutamate--tRNA ligase 2, found in Parvibaculum lavamentivorans (strain DS-1 / DSM 13023 / NCIMB 13966).